Consider the following 314-residue polypeptide: Ribonuclease Z (314 aa).

Histidine 62, histidine 64, aspartate 66, histidine 67, histidine 144, aspartate 215, and histidine 273 together coordinate Zn(2+). Catalysis depends on aspartate 66, which acts as the Proton acceptor.

The protein belongs to the RNase Z family. As to quaternary structure, homodimer. It depends on Zn(2+) as a cofactor.

It catalyses the reaction Endonucleolytic cleavage of RNA, removing extra 3' nucleotides from tRNA precursor, generating 3' termini of tRNAs. A 3'-hydroxy group is left at the tRNA terminus and a 5'-phosphoryl group is left at the trailer molecule.. Functionally, zinc phosphodiesterase, which displays some tRNA 3'-processing endonuclease activity. Probably involved in tRNA maturation, by removing a 3'-trailer from precursor tRNA. This is Ribonuclease Z from Prochlorococcus marinus (strain NATL2A).